A 453-amino-acid polypeptide reads, in one-letter code: UDP-glycosyltransferase 79B6 (453 aa).

Residues S266, 325–327, 342–350, and 364–367 contribute to the UDP-alpha-D-glucose site; these read VQQ, HCGFGSMWE, and LGEQ.

It belongs to the UDP-glycosyltransferase family.

This is UDP-glycosyltransferase 79B6 (UGT79B6) from Arabidopsis thaliana (Mouse-ear cress).